A 323-amino-acid polypeptide reads, in one-letter code: MEKLVIATRASNLALWQAYHIKERIETAFPEVRVELNEITSKGDKILDKPLALVGGKGHFTKELEDEMIAGNAHLAVHSLKDVPTYIPEGLELCAITERQDQSDVFLSHTYKSLSELPEGAVVGTTSLRRRMQLLEKRPDLKVKDLRGNVNTRLRKLKEGQYDAIILAYIGLYRLDLLKDIPYVEKLDFFIPPMGQAALGIEIVANNDRIREIAMTLNHEPTFICTKVERDFISVIGAGCSAPVAVNATMDKKEDDKVPTISVRAMIGYPDGTHILHKSLTVPLNEADILGDELAQAMIEEGALDILEQAEIIAFKDEMPERL.

Residue C240 is modified to S-(dipyrrolylmethanemethyl)cysteine.

Belongs to the HMBS family. As to quaternary structure, monomer. The cofactor is dipyrromethane.

The catalysed reaction is 4 porphobilinogen + H2O = hydroxymethylbilane + 4 NH4(+). It functions in the pathway porphyrin-containing compound metabolism; protoporphyrin-IX biosynthesis; coproporphyrinogen-III from 5-aminolevulinate: step 2/4. In terms of biological role, tetrapolymerization of the monopyrrole PBG into the hydroxymethylbilane pre-uroporphyrinogen in several discrete steps. This Sulfurovum sp. (strain NBC37-1) protein is Porphobilinogen deaminase.